The primary structure comprises 122 residues: MSSRGFNIKARGLCNNNNGGGGTGAKCGRWNPTVEQVKLLTDLFKAGLRTPSTDQIQKISMELSFYGKIESKNVFYWFQNHKARERQKCRKISTVKFDHRQDTDLSKPRRDNVRRHQLPAKG.

The homeobox; WUS-type DNA-binding region spans 25 to 89; the sequence is AKCGRWNPTV…NHKARERQKC (65 aa). Residues 98–111 show a composition bias toward basic and acidic residues; the sequence is DHRQDTDLSKPRRD. Residues 98–122 form a disordered region; that stretch reads DHRQDTDLSKPRRDNVRRHQLPAKG. The span at 112–122 shows a compositional bias: basic residues; sequence NVRRHQLPAKG.

This sequence belongs to the WUS homeobox family.

The protein localises to the nucleus. Its function is as follows. Potential transcription factor that plays a central role during developmental processes. The polypeptide is WUSCHEL-related homeobox 7 (WOX7) (Arabidopsis thaliana (Mouse-ear cress)).